The sequence spans 158 residues: Methylglyoxal synthase (158 aa).

An MGS-like domain is found at 1-158; sequence MRRKLRIALV…AFEESLKVKE (158 aa). Substrate is bound by residues His12, Lys16, 38–41, and 63–64; these read TGTT and SG. Asp69 serves as the catalytic Proton donor/acceptor. Position 96 (His96) interacts with substrate.

It belongs to the methylglyoxal synthase family.

The enzyme catalyses dihydroxyacetone phosphate = methylglyoxal + phosphate. Its function is as follows. Catalyzes the formation of methylglyoxal from dihydroxyacetone phosphate. In Treponema socranskii, this protein is Methylglyoxal synthase.